We begin with the raw amino-acid sequence, 328 residues long: Biotin synthase (328 aa).

Positions 48–275 constitute a Radical SAM core domain; it reads NRIQLSKLLN…KSHVRLTAGR (228 aa). Residues cysteine 63, cysteine 67, and cysteine 70 each contribute to the [4Fe-4S] cluster site. [2Fe-2S] cluster-binding residues include cysteine 107, cysteine 138, cysteine 198, and arginine 270.

This sequence belongs to the radical SAM superfamily. Biotin synthase family. Homodimer. The cofactor is [4Fe-4S] cluster. It depends on [2Fe-2S] cluster as a cofactor.

The catalysed reaction is (4R,5S)-dethiobiotin + (sulfur carrier)-SH + 2 reduced [2Fe-2S]-[ferredoxin] + 2 S-adenosyl-L-methionine = (sulfur carrier)-H + biotin + 2 5'-deoxyadenosine + 2 L-methionine + 2 oxidized [2Fe-2S]-[ferredoxin]. It functions in the pathway cofactor biosynthesis; biotin biosynthesis; biotin from 7,8-diaminononanoate: step 2/2. Catalyzes the conversion of dethiobiotin (DTB) to biotin by the insertion of a sulfur atom into dethiobiotin via a radical-based mechanism. This is Biotin synthase from Brucella abortus (strain S19).